Consider the following 201-residue polypeptide: Large ribosomal subunit protein uL4 (201 aa).

Residues 44–71 are disordered; that stretch reads RAQKTRAEVTGSGKKPWRQKGTGRARSG.

It belongs to the universal ribosomal protein uL4 family. As to quaternary structure, part of the 50S ribosomal subunit.

Functionally, one of the primary rRNA binding proteins, this protein initially binds near the 5'-end of the 23S rRNA. It is important during the early stages of 50S assembly. It makes multiple contacts with different domains of the 23S rRNA in the assembled 50S subunit and ribosome. Forms part of the polypeptide exit tunnel. This is Large ribosomal subunit protein uL4 from Escherichia fergusonii (strain ATCC 35469 / DSM 13698 / CCUG 18766 / IAM 14443 / JCM 21226 / LMG 7866 / NBRC 102419 / NCTC 12128 / CDC 0568-73).